Reading from the N-terminus, the 199-residue chain is NAD(P)H dehydrogenase (quinone) (199 aa).

Residues V4 to V190 enclose the Flavodoxin-like domain. Residues S10–I15 and T79–F81 each bind FMN. Y12 lines the NAD(+) pocket. W99 is a substrate binding site. FMN is bound by residues S114–G119 and H134.

This sequence belongs to the WrbA family. FMN is required as a cofactor.

It carries out the reaction a quinone + NADH + H(+) = a quinol + NAD(+). The enzyme catalyses a quinone + NADPH + H(+) = a quinol + NADP(+). This Marinobacter nauticus (strain ATCC 700491 / DSM 11845 / VT8) (Marinobacter aquaeolei) protein is NAD(P)H dehydrogenase (quinone).